Here is a 251-residue protein sequence, read N- to C-terminus: Imidazole glycerol phosphate synthase subunit HisF (251 aa).

Active-site residues include Asp11 and Asp130.

This sequence belongs to the HisA/HisF family. In terms of assembly, heterodimer of HisH and HisF.

The protein resides in the cytoplasm. The enzyme catalyses 5-[(5-phospho-1-deoxy-D-ribulos-1-ylimino)methylamino]-1-(5-phospho-beta-D-ribosyl)imidazole-4-carboxamide + L-glutamine = D-erythro-1-(imidazol-4-yl)glycerol 3-phosphate + 5-amino-1-(5-phospho-beta-D-ribosyl)imidazole-4-carboxamide + L-glutamate + H(+). The protein operates within amino-acid biosynthesis; L-histidine biosynthesis; L-histidine from 5-phospho-alpha-D-ribose 1-diphosphate: step 5/9. Functionally, IGPS catalyzes the conversion of PRFAR and glutamine to IGP, AICAR and glutamate. The HisF subunit catalyzes the cyclization activity that produces IGP and AICAR from PRFAR using the ammonia provided by the HisH subunit. This chain is Imidazole glycerol phosphate synthase subunit HisF, found in Natranaerobius thermophilus (strain ATCC BAA-1301 / DSM 18059 / JW/NM-WN-LF).